We begin with the raw amino-acid sequence, 222 residues long: NADH dehydrogenase [ubiquinone] iron-sulfur protein 8-B, mitochondrial (222 aa).

2 4Fe-4S ferredoxin-type domains span residues 114 to 143 and 153 to 182; these read RRYP…IEAE and TRYD…EGPN. Residues Cys123, Cys126, Cys129, Cys133, Cys162, Cys165, Cys168, and Cys172 each coordinate [4Fe-4S] cluster.

It belongs to the complex I 23 kDa subunit family. Complex I is composed of at least 49 different subunits. This is a component of the iron-sulfur (IP) fragment of the enzyme. [4Fe-4S] cluster serves as cofactor.

It is found in the mitochondrion. The enzyme catalyses a ubiquinone + NADH + 5 H(+)(in) = a ubiquinol + NAD(+) + 4 H(+)(out). Its function is as follows. Core subunit of the mitochondrial membrane respiratory chain NADH dehydrogenase (Complex I) that is believed to belong to the minimal assembly required for catalysis. Complex I functions in the transfer of electrons from NADH to the respiratory chain. The immediate electron acceptor for the enzyme is believed to be ubiquinone. May donate electrons to ubiquinone. The protein is NADH dehydrogenase [ubiquinone] iron-sulfur protein 8-B, mitochondrial of Arabidopsis thaliana (Mouse-ear cress).